We begin with the raw amino-acid sequence, 101 residues long: Small ribosomal subunit protein uS14 (101 aa).

Belongs to the universal ribosomal protein uS14 family. In terms of assembly, part of the 30S ribosomal subunit. Contacts proteins S3 and S10.

In terms of biological role, binds 16S rRNA, required for the assembly of 30S particles and may also be responsible for determining the conformation of the 16S rRNA at the A site. The sequence is that of Small ribosomal subunit protein uS14 from Ralstonia pickettii (strain 12J).